We begin with the raw amino-acid sequence, 921 residues long: Short transient receptor potential channel 3 (921 aa).

Residues 1–73 (MSTKVRKCKE…PPFSHGPDLS (73 aa)) are disordered. The Cytoplasmic segment spans residues 1–459 (MSTKVRKCKE…KILRSPFMKF (459 aa)). Residues 19–31 (PEEEEDEGEDEGA) show a composition bias toward acidic residues. ANK repeat units lie at residues 111–140 (AEEERFLDAAEYGNIPVVRKMLEESKTLNV), 146–175 (MGQNALQLAVGNEHLEVTELLLKKENLARI), 177–203 (DALLLAISKGYVRIVEAILNHPGFAAS), and 232–261 (PDITPIILAAHCQKYEVVHMLLMKGARIER). Residue E158 coordinates Ca(2+). A helical transmembrane segment spans residues 460-477 (VAHAASFIIFLGLLVFNA). Topologically, residues 478 to 508 (SDRFEGITTLPNITVTDYPKQIFRVKTTQFT) are extracellular. The N-linked (GlcNAc...) asparagine glycan is linked to N489. A helical membrane pass occupies residues 509–527 (WTEMLIMVWVLGMMWSECK). Positions 525, 528, and 543 each coordinate Ca(2+). Topologically, residues 528-540 (ELWLEGPREYILQ) are cytoplasmic. Residues 541–562 (LWNVLDFGMLSIFIAAFTARFL) traverse the membrane as a helical segment. Residues 563–606 (AFLQATKAQQYVDSYVQESDLSEVTLPPEIQYFTYARDKWLPSD) are Extracellular-facing. Residues 607–630 (PQIISEGLYAIAVVLSFSRIAYIL) traverse the membrane as a helical segment. The Cytoplasmic portion of the chain corresponds to 631–649 (PANESFGPLQISLGRTVKD). The stretch at 634 to 663 (ESFGPLQISLGRTVKDIFKFMVLFIMVFFA) is one ANK 5 repeat. The helical transmembrane segment at 650-673 (IFKFMVLFIMVFFAFMIGMFILYS) threads the bilayer. Residues 674 to 713 (YYLGAKVNAAFTTVEESFKTLFWSIFGLSEVTSVVLKYDH) lie on the Extracellular side of the membrane. A helical membrane pass occupies residues 714–739 (KFIENIGYVLYGIYNVTMVVVLLNML). The Cytoplasmic portion of the chain corresponds to 740–921 (IAMINSSYQE…KLNPSMLRCE (182 aa)). The segment at 850-870 (QIMKRLIKRYVLKAQVDKEND) is binds to IP3R3. Ca(2+)-binding residues include E871, E874, E876, and D883.

It belongs to the transient receptor (TC 1.A.4) family. STrpC subfamily. TRPC3 sub-subfamily. In terms of assembly, homotetramer. Interacts with ITPR1. Interacts with ITPR3. Interacts with MX1. Interacts with RNF24. Interacts with JPH2; the interaction is involved in maintaining Ca(2+) homeostasis in skeletal muscle and is mediated by JPH2 'Ser-165' phosphorylation. As to quaternary structure, interacts with isoform short of TRPC1. In terms of tissue distribution, expressed predominantly in brain and at much lower levels in ovary, colon, small intestine, lung, prostate, placenta and testis.

It localises to the cell membrane. The catalysed reaction is Ca(2+)(in) = Ca(2+)(out). With respect to regulation, activated by diacylglycerol (DAG) in a membrane-delimited fashion, independently of protein kinase C. Activated by inositol 1,4,5-triphosphate receptors (ITPR) with bound IP3. May be activated by internal calcium store depletion. Inhibited by intracellular Ca(2+). In terms of biological role, forms a receptor-activated non-selective calcium permeant cation channel. Its function is as follows. Forms a receptor-activated non-selective calcium permeant cation channel. May be operated by a phosphatidylinositol second messenger system activated by receptor tyrosine kinases or G-protein coupled receptors. This is Short transient receptor potential channel 3 (TRPC3) from Homo sapiens (Human).